A 258-amino-acid chain; its full sequence is Indole-3-glycerol phosphate synthase (258 aa).

This sequence belongs to the TrpC family.

The catalysed reaction is 1-(2-carboxyphenylamino)-1-deoxy-D-ribulose 5-phosphate + H(+) = (1S,2R)-1-C-(indol-3-yl)glycerol 3-phosphate + CO2 + H2O. It participates in amino-acid biosynthesis; L-tryptophan biosynthesis; L-tryptophan from chorismate: step 4/5. In Campylobacter fetus subsp. fetus (strain 82-40), this protein is Indole-3-glycerol phosphate synthase.